We begin with the raw amino-acid sequence, 320 residues long: RNA-binding protein Musashi homolog 1 (320 aa).

A compositionally biased stretch (low complexity) spans Met-1 to Thr-14. Positions Met-1–Phe-48 are disordered. A Phosphothreonine modification is found at Thr-18. Ser-19 and Ser-34 each carry phosphoserine. Positions Asp-23–Ser-38 are enriched in basic and acidic residues. 2 RRM domains span residues Gly-45 to Arg-124 and Lys-134 to Pro-211. Required for binding to target mRNAs stretches follow at residues Phe-88 to Phe-93 and Phe-177 to Phe-182.

It belongs to the Musashi family. In terms of tissue distribution, expressed in the gut and in AVA, AFD, RMD, RMED, RMEV, RMER and RMEL neurons (at protein level). In the tail expressed in neurons and all the ray sensilla. Expressed in male specific C1-C4 neurons.

The protein localises to the cytoplasm. Its subcellular location is the perikaryon. In terms of biological role, RNA binding protein that regulates the expression of target mRNAs at the translation level. Binds RNA containing the 5'-[GA]U(1-3)AGU-3' motif located in the 3' UTR of the target mRNA. Binds to the mRNA of three Arp2/3 complex components arx-1, arx-2 and arx-3 and negatively regulates their translation during association learning. Plays a role in time-dependent memory loss and the retention of conditioned behavior over time, probably through negative regulation of the Arp2/3 actin cytoskeleton branching complex and regulation of synapse size. Required for two aspects of male mating behavior: turning around the hermaphrodite head or tail and vulva location. The sequence is that of RNA-binding protein Musashi homolog 1 from Caenorhabditis elegans.